We begin with the raw amino-acid sequence, 570 residues long: Glutamate--tRNA ligase (570 aa).

The 'HIGH' region signature appears at 105 to 115 (PNPDGAFHLGN).

The protein belongs to the class-I aminoacyl-tRNA synthetase family. Glutamate--tRNA ligase type 2 subfamily.

It is found in the cytoplasm. It catalyses the reaction tRNA(Glu) + L-glutamate + ATP = L-glutamyl-tRNA(Glu) + AMP + diphosphate. Its function is as follows. Catalyzes the attachment of glutamate to tRNA(Glu) in a two-step reaction: glutamate is first activated by ATP to form Glu-AMP and then transferred to the acceptor end of tRNA(Glu). This Pyrococcus horikoshii (strain ATCC 700860 / DSM 12428 / JCM 9974 / NBRC 100139 / OT-3) protein is Glutamate--tRNA ligase.